The following is a 175-amino-acid chain: MLRRGALSTILKGLNGLSLRSPIPIWHVSASPEVGSKYNLPTVPTTSHVSYRQIAKANFFAGYRPLSANQICVPKVESKTQVSQSQDEEDQPQEYVLSLEDGYLYAQSFSASGSVTQTQPARISTQVWEQICDKLISITPLDLTSVKRKRKLKMNKHKFKKRLRRQRALRKRLGK.

This sequence belongs to the mitochondrion-specific ribosomal protein mS38 family. In terms of assembly, component of the mitochondrial small ribosomal subunit (mt-SSU). Mature yeast 74S mitochondrial ribosomes consist of a small (37S) and a large (54S) subunit. The 37S small subunit contains a 15S ribosomal RNA (15S mt-rRNA) and at least 32 different proteins. The 54S large subunit contains a 21S rRNA (21S mt-rRNA) and at least 45 different proteins.

The protein localises to the mitochondrion. It localises to the mitochondrion inner membrane. Component of the mitochondrial ribosome (mitoribosome), a dedicated translation machinery responsible for the synthesis of mitochondrial genome-encoded proteins, including at least some of the essential transmembrane subunits of the mitochondrial respiratory chain. The mitoribosomes are attached to the mitochondrial inner membrane and translation products are cotranslationally integrated into the membrane. mS38 is also involved in the splicing of the COX1 mRNA. The chain is Small ribosomal subunit protein mS38 (cox24) from Schizosaccharomyces pombe (strain 972 / ATCC 24843) (Fission yeast).